Consider the following 901-residue polypeptide: Cyanophycin synthetase (901 aa).

In terms of domain architecture, ATP-grasp spans Lys-224–Phe-478. ATP is bound at residue Gly-493–Thr-499.

It in the C-terminal section; belongs to the MurCDEF family. As to quaternary structure, homodimer.

It carries out the reaction [L-4-(L-arginin-2-N-yl)aspartate](n) + L-aspartate + ATP = [L-4-(L-arginin-2-N-yl)aspartate](n)-L-aspartate + ADP + phosphate + H(+). The catalysed reaction is [L-4-(L-arginin-2-N-yl)aspartate](n)-L-aspartate + L-arginine + ATP = [L-4-(L-arginin-2-N-yl)aspartate](n+1) + ADP + phosphate + H(+). Catalyzes the ATP-dependent polymerization of arginine and aspartate to multi-L-arginyl-poly-L-aspartic acid (cyanophycin; a water-insoluble reserve polymer). The polypeptide is Cyanophycin synthetase (cphA) (Nostoc sp. (strain PCC 7120 / SAG 25.82 / UTEX 2576)).